We begin with the raw amino-acid sequence, 214 residues long: Cytochrome b (214 aa).

Transmembrane regions (helical) follow at residues Phe-31–Ile-51, Trp-75–Ile-96, Trp-111–Leu-131, and Phe-176–Leu-196. Heme b contacts are provided by His-81 and His-95. Heme b contacts are provided by His-180 and His-194. His-199 contributes to the a ubiquinone binding site.

Belongs to the cytochrome b family. As to quaternary structure, the cytochrome bc1 complex contains 3 respiratory subunits (MT-CYB, CYC1 and UQCRFS1), 2 core proteins (UQCRC1 and UQCRC2) and probably 6 low-molecular weight proteins. Heme b is required as a cofactor.

It is found in the mitochondrion inner membrane. Functionally, component of the ubiquinol-cytochrome c reductase complex (complex III or cytochrome b-c1 complex) that is part of the mitochondrial respiratory chain. The b-c1 complex mediates electron transfer from ubiquinol to cytochrome c. Contributes to the generation of a proton gradient across the mitochondrial membrane that is then used for ATP synthesis. The sequence is that of Cytochrome b (MT-CYB) from Bothrops atrox (Barba amarilla).